Reading from the N-terminus, the 251-residue chain is 2-amino-5-chloromuconate deaminase (251 aa).

In terms of assembly, monomer.

It carries out the reaction (2Z,4E)-2-aminomuconate + H2O = (2Z,4E)-2-hydroxyhexa-2,4-dienedioate + NH4(+). The protein operates within xenobiotic degradation; 4-chloronitrobenzene degradation. Its pathway is xenobiotic degradation; nitrobenzene degradation. With respect to regulation, cysteine residue modifying agents such as p-chloromercuribenzoate and the SH-binding metals Zn(2+), Ni(2+) and Cu(2+) completely inhibit deaminase activity, whereas Ca(2+), Mg(2+) and the histidine residue-modifying agent diethyl pyrocarbonate inhibit the activity by 23 to 50%. Its function is as follows. Involved in the biodegradation of xenobiotic compounds, such as nitrobenzene and 4-chloronitrobenzene (4-CNB). CnbZ preferentially catalyzes the deamination of 2-amino-5-chloromuconate (2A5CM) to yield 2-hydroxy-5-chloromuconate (2H5CM). Also able to catalyze the deamination of 2-aminomuconate to yield 2-hydroxymuconate, which spontaneously converts into its keto form, 2-oxalocrotonate. This Comamonas testosteroni (Pseudomonas testosteroni) protein is 2-amino-5-chloromuconate deaminase.